A 426-amino-acid chain; its full sequence is MSKSENLYSAARELIPGGVNSPVRAFTGVGGTPLFIERADGAFLYDVDGKAYIDYVGSWGPMVLGHNHPTIRNAVIEAAQRGLSFGAPTEMEVKMAELVTELVPTMDMVRMVNSGTEATMSAIRLARGFTGRDKIIKFEGCYHGHADCLLVKAGSGALTLGQPNSPGVPADFAKHTLTCTYNDLDTVRAAFEQYPQEVACIIVEPVAGNMNCIPPQPDFLPGLRALCDEFGALLIIDEVMTGFRVALAGAQSYYDVVPDLTCLGKIIGGGMPVGAFGGRKDVMEALAPTGPVYQAGTLSGNPIAMAAGFACLTEVAQPGIHETLTDLTAQLANGLLEAAEETGVPLVVNHVGGMFGIFFTDAKTVTCYQDVVKCDVERFKRFFHLMLEEGVYLAPSAFEAGFMSVAHSVEDINKTIDAARKVFAKL.

At Lys265 the chain carries N6-(pyridoxal phosphate)lysine.

The protein belongs to the class-III pyridoxal-phosphate-dependent aminotransferase family. HemL subfamily. As to quaternary structure, homodimer. Pyridoxal 5'-phosphate is required as a cofactor.

The protein resides in the cytoplasm. It carries out the reaction (S)-4-amino-5-oxopentanoate = 5-aminolevulinate. It functions in the pathway porphyrin-containing compound metabolism; protoporphyrin-IX biosynthesis; 5-aminolevulinate from L-glutamyl-tRNA(Glu): step 2/2. The sequence is that of Glutamate-1-semialdehyde 2,1-aminomutase from Enterobacter sp. (strain 638).